The sequence spans 283 residues: Probable endonuclease 4 (283 aa).

Zn(2+) contacts are provided by His67, His107, Glu144, Asp178, His181, His215, Asp228, His230, and Glu260.

This sequence belongs to the AP endonuclease 2 family. Requires Zn(2+) as cofactor.

The enzyme catalyses Endonucleolytic cleavage to 5'-phosphooligonucleotide end-products.. Its function is as follows. Endonuclease IV plays a role in DNA repair. It cleaves phosphodiester bonds at apurinic or apyrimidinic (AP) sites, generating a 3'-hydroxyl group and a 5'-terminal sugar phosphate. The polypeptide is Probable endonuclease 4 (Citrifermentans bemidjiense (strain ATCC BAA-1014 / DSM 16622 / JCM 12645 / Bem) (Geobacter bemidjiensis)).